A 67-amino-acid polypeptide reads, in one-letter code: Probable Sec-independent protein translocase protein TatE (67 aa).

A helical transmembrane segment spans residues 4–21 (ISITKLLVIAALVVLLFG).

This sequence belongs to the TatA/E family. TatE subfamily.

It localises to the cell inner membrane. Part of the twin-arginine translocation (Tat) system that transports large folded proteins containing a characteristic twin-arginine motif in their signal peptide across membranes. TatE shares overlapping functions with TatA. The polypeptide is Probable Sec-independent protein translocase protein TatE (Citrobacter rodentium (strain ICC168) (Citrobacter freundii biotype 4280)).